The sequence spans 951 residues: Metal transporter CNNM1 (951 aa).

Residues A23–L43 form a helical membrane-spanning segment. The segment at G116 to E135 is disordered. One can recognise a CNNM transmembrane domain in the interval L218 to E414. A run of 3 helical transmembrane segments spans residues A222–L242, L282–Y302, and I321–I341. 2 consecutive CBS domains span residues L433–L495 and Y502–E568. Composition is skewed to polar residues over residues S731–E740 and K814–T824. 2 disordered regions span residues S731–N753 and M795–A830. A phosphothreonine mark is found at T821 and T824. S850 is modified (phosphoserine). Positions K920–T951 are disordered. The segment covering D942–T951 has biased composition (polar residues).

It belongs to the ACDP family. In terms of tissue distribution, restricted to brain and testis.

The protein resides in the cell membrane. Functionally, probable metal transporter. This chain is Metal transporter CNNM1 (CNNM1), found in Homo sapiens (Human).